The following is a 148-amino-acid chain: Transcriptional regulator MraZ (148 aa).

2 consecutive SpoVT-AbrB domains span residues 5–53 (ETAI…VEKE) and 82–125 (SALL…SEQA).

This sequence belongs to the MraZ family. In terms of assembly, forms oligomers.

It localises to the cytoplasm. It is found in the nucleoid. This Xylella fastidiosa (strain 9a5c) protein is Transcriptional regulator MraZ.